Consider the following 150-residue polypeptide: Large ribosomal subunit protein bL9 (150 aa).

The protein belongs to the bacterial ribosomal protein bL9 family.

Functionally, binds to the 23S rRNA. This is Large ribosomal subunit protein bL9 from Leuconostoc citreum (strain KM20).